Reading from the N-terminus, the 561-residue chain is uncharacterized protein (561 aa).

The signal sequence occupies residues Met-1 to Cys-24. The Lumenal portion of the chain corresponds to Lys-25–Gln-509. The helical transmembrane segment at Tyr-510 to Asn-530 threads the bilayer. Residues Arg-531–Asp-561 are Cytoplasmic-facing.

It localises to the endoplasmic reticulum membrane. Its subcellular location is the golgi apparatus membrane. This is an uncharacterized protein from Schizosaccharomyces pombe (strain 972 / ATCC 24843) (Fission yeast).